The primary structure comprises 331 residues: MILAVDAMGGDHAPRAIVEGVVQFLAERPTEQIEIRLVGDELKLRSYDIKDPRVKIVHAASVITGEDEPVRAIRRKKDSSLVVAANLVKSNEADALISAGNTGALMTAGLFVIGRIEGIDRPALAPTFPTRNGKGVVILDVGANPDAKAEHLLDYAIMGSVYAEQVRGIKQPKVALLNIGSEAGKGNALTKETYPLLETAPIHFVGNVEAREAMSGEVDVIVTEGFAGNTLLKSTEGAASMIMGVMKEQFMSSFSSKIAALILKPKLKKMKQLLAYEEYGGAGLFGIAAPVIKAHGSSNAYAFSRALVQAEQMVEQQVVTKIIEAKKTKEI.

It belongs to the PlsX family. As to quaternary structure, homodimer. Probably interacts with PlsY.

The protein localises to the cytoplasm. It carries out the reaction a fatty acyl-[ACP] + phosphate = an acyl phosphate + holo-[ACP]. It functions in the pathway lipid metabolism; phospholipid metabolism. Its function is as follows. Catalyzes the reversible formation of acyl-phosphate (acyl-PO(4)) from acyl-[acyl-carrier-protein] (acyl-ACP). This enzyme utilizes acyl-ACP as fatty acyl donor, but not acyl-CoA. This is Phosphate acyltransferase from Exiguobacterium sibiricum (strain DSM 17290 / CCUG 55495 / CIP 109462 / JCM 13490 / 255-15).